The following is a 502-amino-acid chain: Medium/long-chain-fatty-acid--CoA ligase FadD17 (502 aa).

This sequence belongs to the ATP-dependent AMP-binding enzyme family.

The catalysed reaction is a medium-chain fatty acid + ATP + CoA = a medium-chain fatty acyl-CoA + AMP + diphosphate. The enzyme catalyses a long-chain fatty acid + ATP + CoA = a long-chain fatty acyl-CoA + AMP + diphosphate. Its pathway is lipid metabolism; fatty acid biosynthesis. In terms of biological role, catalyzes the activation of medium/long-chain fatty acids as acyl-coenzyme A (acyl-CoA), which are then transferred to the multifunctional polyketide synthase (PKS) type III for further chain extension. The chain is Medium/long-chain-fatty-acid--CoA ligase FadD17 (fadD17) from Mycobacterium bovis (strain ATCC BAA-935 / AF2122/97).